The following is a 109-amino-acid chain: Nucleoid-associated protein BCE_0021 (109 aa).

Belongs to the YbaB/EbfC family. In terms of assembly, homodimer.

The protein resides in the cytoplasm. Its subcellular location is the nucleoid. In terms of biological role, binds to DNA and alters its conformation. May be involved in regulation of gene expression, nucleoid organization and DNA protection. The sequence is that of Nucleoid-associated protein BCE_0021 from Bacillus cereus (strain ATCC 10987 / NRS 248).